The following is a 232-amino-acid chain: Anti-sigma-K factor RskA (232 aa).

Residues 1–90 (MTEHTDFELL…EVRRQSRWRT (90 aa)) lie on the Cytoplasmic side of the membrane. A helical transmembrane segment spans residues 91–111 (AAFASAAAIAVGLGAFGLGVL). Over 112 to 232 (TRPSPPPTVA…GTILAELPLG (121 aa)) the chain is Extracellular.

It belongs to the anti-sigma-K factor family.

It localises to the cell membrane. An anti-sigma factor for extracytoplasmic function (ECF) sigma factor SigK. ECF sigma factors are held in an inactive form by an anti-sigma factor until released by regulated intramembrane proteolysis (RIP). RIP occurs when an extracytoplasmic signal triggers a concerted proteolytic cascade to transmit information and elicit cellular responses. The membrane-spanning regulatory substrate protein is first cut extracytoplasmically (site-1 protease, S1P), then within the membrane itself (site-2 protease, S2P, Rip1), while cytoplasmic proteases finish degrading the regulatory protein, liberating the sigma factor. The sequence is that of Anti-sigma-K factor RskA (rskA) from Mycobacterium tuberculosis (strain ATCC 25177 / H37Ra).